A 473-amino-acid polypeptide reads, in one-letter code: MASCVGSRTLSKDDVNYRMHFRMINEQQVEDITIDFFYRPHTITLLSFTIISLMYFAFTRDDSVPEDNIWRGILSVIFFFLIISVLAFPNGPFTRPHPALWRMVFGLSVLYFLFLVFLLFLNFEQVKSLMYWLDPNLRYATREADIMEYAVNCHVITWERIVSHFDIFAFGHFWGWAMKALLIRSYGLCWTISITWELTELFFMHLLPNFAECWWDQVILDILLCNGGGIWLGMVVCRFLEMRTYHWASFKDIHTTTGKIKRAVLQFTPASWTYVRWFDPKSSFQRVAGIYLFMIIWQLTELNTFFLKHIFVFQASHPLSWGRILFIGCITAPTVRQYYAYLTDTQCKRVGTQCWVFGVIGFLEAIVCIKFGQDLFSKTQILYVMLWLLCVAFTTFLCLYGMVWYAEHYGHREKTYSECEDGTYSPEISWHHGKGSKGSEDSPPKHSSNHESHSSRRRNRHSKSKVTNGVGKK.

Ala-2 is modified (N-acetylalanine). The Cytoplasmic segment spans residues 2–35; it reads ASCVGSRTLSKDDVNYRMHFRMINEQQVEDITID. A helical transmembrane segment spans residues 36-56; the sequence is FFYRPHTITLLSFTIISLMYF. Topologically, residues 57-72 are lumenal; that stretch reads AFTRDDSVPEDNIWRG. Residues 73 to 93 traverse the membrane as a helical segment; that stretch reads ILSVIFFFLIISVLAFPNGPF. Topologically, residues 94–102 are cytoplasmic; it reads TRPHPALWR. Residues 103 to 123 traverse the membrane as a helical segment; the sequence is MVFGLSVLYFLFLVFLLFLNF. At 124–186 the chain is on the lumenal side; the sequence is EQVKSLMYWL…AMKALLIRSY (63 aa). A helical membrane pass occupies residues 187–207; that stretch reads GLCWTISITWELTELFFMHLL. At 208–216 the chain is on the cytoplasmic side; the sequence is PNFAECWWD. A helical membrane pass occupies residues 217 to 237; that stretch reads QVILDILLCNGGGIWLGMVVC. Topologically, residues 238-286 are lumenal; the sequence is RFLEMRTYHWASFKDIHTTTGKIKRAVLQFTPASWTYVRWFDPKSSFQR. A helical membrane pass occupies residues 287–307; the sequence is VAGIYLFMIIWQLTELNTFFL. The Cytoplasmic segment spans residues 308-319; sequence KHIFVFQASHPL. Residues 320 to 342 form a helical membrane-spanning segment; sequence SWGRILFIGCITAPTVRQYYAYL. Residues 343 to 355 are Lumenal-facing; that stretch reads TDTQCKRVGTQCW. The chain crosses the membrane as a helical span at residues 356-376; the sequence is VFGVIGFLEAIVCIKFGQDLF. Over 377-383 the chain is Cytoplasmic; that stretch reads SKTQILY. A helical membrane pass occupies residues 384-404; that stretch reads VMLWLLCVAFTTFLCLYGMVW. Topologically, residues 405–473 are lumenal; the sequence is YAEHYGHREK…SKVTNGVGKK (69 aa). 4 positions are modified to phosphoserine: Ser-417, Ser-425, Ser-442, and Ser-454. The interval 428-473 is disordered; sequence ISWHHGKGSKGSEDSPPKHSSNHESHSSRRRNRHSKSKVTNGVGKK. Positions 437–454 are enriched in basic and acidic residues; it reads KGSEDSPPKHSSNHESHS. Over residues 455 to 464 the composition is skewed to basic residues; that stretch reads SRRRNRHSKS.

This sequence belongs to the phosphatidyl serine synthase family. As to expression, expressed in kidney, testis, lung, skeletal muscle, liver brain, heart and spleen with highest expression in testis, liver, heart and brain.

Its subcellular location is the endoplasmic reticulum membrane. It catalyses the reaction a 1,2-diacyl-sn-glycero-3-phosphoethanolamine + L-serine = a 1,2-diacyl-sn-glycero-3-phospho-L-serine + ethanolamine. The catalysed reaction is a 1,2-diacyl-sn-glycero-3-phosphocholine + L-serine = a 1,2-diacyl-sn-glycero-3-phospho-L-serine + choline. It functions in the pathway phospholipid metabolism; phosphatidylserine biosynthesis. With respect to regulation, potently inhibited by choline in the mitochondria-associated membrane (MAM). Very little inhibition by choline in the endoplasmic reticulum (ER) per se. Catalyzes a base-exchange reaction in which the polar head group of phosphatidylethanolamine (PE) or phosphatidylcholine (PC) is replaced by L-serine. Catalyzes mainly the conversion of phosphatidylcholine. Also converts, in vitro and to a lesser extent, phosphatidylethanolamine. The polypeptide is Phosphatidylserine synthase 1 (Ptdss1) (Mus musculus (Mouse)).